The chain runs to 368 residues: Zinc finger protein 24 (368 aa).

A Glycyl lysine isopeptide (Lys-Gly) (interchain with G-Cter in SUMO2) cross-link involves residue lysine 22. Lysine 27 is covalently cross-linked (Glycyl lysine isopeptide (Lys-Gly) (interchain with G-Cter in SUMO1); alternate). Lysine 27 is covalently cross-linked (Glycyl lysine isopeptide (Lys-Gly) (interchain with G-Cter in SUMO2); alternate). The SCAN box domain occupies 52–134 (RQRFRQFGYQ…AVLEDLESEL (83 aa)). 2 positions are modified to phosphoserine: serine 132 and serine 142. Residues lysine 147, lysine 177, and lysine 236 each participate in a glycyl lysine isopeptide (Lys-Gly) (interchain with G-Cter in SUMO2) cross-link. Residues 251-273 (HICDECGKHFSQGSALILHQRIH) form a C2H2-type 1 zinc finger. The segment at 251–301 (HICDECGKHFSQGSALILHQRIHSGEKPYGCVECGKAFSRSSILVQHQRVH) is necessary and sufficient for nuclear localization. Serine 274 bears the Phosphoserine mark. Residues lysine 277 and lysine 286 each participate in a glycyl lysine isopeptide (Lys-Gly) (interchain with G-Cter in SUMO2) cross-link. 3 consecutive C2H2-type zinc fingers follow at residues 279–301 (YGCVECGKAFSRSSILVQHQRVH), 307–329 (YKCLECGKAFSQNSGLINHQRIH), and 335–357 (YECVQCGKSYSQSSNLFRHQRRH). The residue at position 292 (serine 292) is a Phosphoserine. Tyrosine 335 is modified (phosphotyrosine). Residues lysine 361 and lysine 367 each participate in a glycyl lysine isopeptide (Lys-Gly) (interchain with G-Cter in SUMO2) cross-link.

The protein belongs to the krueppel C2H2-type zinc-finger protein family. Post-translationally, sumoylated. As to expression, widely expressed with highest levels in heart, brain, liver, skeletal muscle, kidney and testis and very low levels in spleen and lung.

Its subcellular location is the nucleus. In terms of biological role, transcription factor required for myelination of differentiated oligodendrocytes. Required for the conversion of oligodendrocytes from the premyelinating to the myelinating state. In the developing central nervous system (CNS), involved in the maintenance in the progenitor stage by promoting the cell cycle. Specifically binds to the 5'-TCAT-3' DNA sequence. Has transcription repressor activity in vitro. This chain is Zinc finger protein 24, found in Mus musculus (Mouse).